A 255-amino-acid polypeptide reads, in one-letter code: Type III pantothenate kinase (255 aa).

ATP is bound at residue 12-19; it reads DIGNSYTK. 109 to 112 provides a ligand contact to substrate; sequence GDDL. Catalysis depends on D111, which acts as the Proton acceptor. Residue T133 coordinates ATP. T185 is a substrate binding site.

It belongs to the type III pantothenate kinase family. In terms of assembly, homodimer. The cofactor is NH4(+). It depends on K(+) as a cofactor.

The protein localises to the cytoplasm. The catalysed reaction is (R)-pantothenate + ATP = (R)-4'-phosphopantothenate + ADP + H(+). It participates in cofactor biosynthesis; coenzyme A biosynthesis; CoA from (R)-pantothenate: step 1/5. Catalyzes the phosphorylation of pantothenate (Pan), the first step in CoA biosynthesis. The sequence is that of Type III pantothenate kinase from Malacoplasma penetrans (strain HF-2) (Mycoplasma penetrans).